The sequence spans 529 residues: Glucose-6-phosphate isomerase (529 aa).

The Proton donor role is filled by Glu-322. Active-site residues include His-351 and Lys-455.

It belongs to the GPI family.

Its subcellular location is the cytoplasm. The enzyme catalyses alpha-D-glucose 6-phosphate = beta-D-fructose 6-phosphate. The protein operates within carbohydrate biosynthesis; gluconeogenesis. It functions in the pathway carbohydrate degradation; glycolysis; D-glyceraldehyde 3-phosphate and glycerone phosphate from D-glucose: step 2/4. Functionally, catalyzes the reversible isomerization of glucose-6-phosphate to fructose-6-phosphate. This is Glucose-6-phosphate isomerase from Thermosynechococcus vestitus (strain NIES-2133 / IAM M-273 / BP-1).